We begin with the raw amino-acid sequence, 392 residues long: Alkaline phosphatase L (392 aa).

Residues 1–23 form the signal peptide; it reads MYKRSLIAASLSVAALVSAQAMA.

Belongs to the PstS family. As to quaternary structure, homodimer.

Its subcellular location is the secreted. It is found in the periplasm. It carries out the reaction a phosphate monoester + H2O = an alcohol + phosphate. Its function is as follows. Has both a phosphomonoesterase and phosphodiesterase activity. The sequence is that of Alkaline phosphatase L from Pseudomonas aeruginosa.